The chain runs to 453 residues: Ribulose bisphosphate carboxylase large chain (453 aa).

Residues 1 to 2 constitute a propeptide that is removed on maturation; the sequence is MS. At Pro3 the chain carries N-acetylproline. Lys14 carries the post-translational modification N6,N6,N6-trimethyllysine. Substrate-binding residues include Asn123 and Thr173. Lys175 (proton acceptor) is an active-site residue. Lys177 contributes to the substrate binding site. Residues Lys201, Asp203, and Glu204 each contribute to the Mg(2+) site. Lys201 is modified (N6-carboxylysine). Catalysis depends on His294, which acts as the Proton acceptor. Positions 295, 327, and 379 each coordinate substrate.

The protein belongs to the RuBisCO large chain family. Type I subfamily. Heterohexadecamer of 8 large chains and 8 small chains; disulfide-linked. The disulfide link is formed within the large subunit homodimers. It depends on Mg(2+) as a cofactor. In terms of processing, the disulfide bond which can form in the large chain dimeric partners within the hexadecamer appears to be associated with oxidative stress and protein turnover.

It is found in the plastid. The protein resides in the chloroplast. It catalyses the reaction 2 (2R)-3-phosphoglycerate + 2 H(+) = D-ribulose 1,5-bisphosphate + CO2 + H2O. The enzyme catalyses D-ribulose 1,5-bisphosphate + O2 = 2-phosphoglycolate + (2R)-3-phosphoglycerate + 2 H(+). Its function is as follows. RuBisCO catalyzes two reactions: the carboxylation of D-ribulose 1,5-bisphosphate, the primary event in carbon dioxide fixation, as well as the oxidative fragmentation of the pentose substrate in the photorespiration process. Both reactions occur simultaneously and in competition at the same active site. This is Ribulose bisphosphate carboxylase large chain from Galium palustre (Common marsh bedstraw).